The primary structure comprises 544 residues: Calcium-dependent protein kinase 6 (544 aa).

The tract at residues 1-47 is disordered; the sequence is MGNSCRGSFKDKIYEGNHSRPEENSKSTTTTVSSVHSPTTDQDFSKQ. Residue Gly-2 is the site of N-myristoyl glycine attachment. Over residues 8 to 25 the composition is skewed to basic and acidic residues; sequence SFKDKIYEGNHSRPEENS. Residues 26 to 40 are compositionally biased toward low complexity; sequence KSTTTTVSSVHSPTT. In terms of domain architecture, Protein kinase spans 85–343; that stretch reads YTLSRKLGQG…AHEVLRHPWI (259 aa). ATP-binding positions include 91-99 and Lys-114; that span reads LGQGQFGTT. Asp-209 functions as the Proton acceptor in the catalytic mechanism. Phosphoserine is present on Ser-249. The segment at 349 to 379 is autoinhibitory domain; sequence APDRALDPAVLSRLKQFSAMNKLKKMALKVI. EF-hand domains follow at residues 386–421, 422–457, 458–493, and 497–527; these read EEIA…YGST, LKDT…LNKL, EREE…HGMT, and LEDI…GNAG. Ca(2+) is bound by residues Asp-399, Asp-401, Ser-403, Glu-410, Asp-435, Asp-437, Ser-439, Thr-441, Glu-446, Asp-471, Asp-473, Ser-475, Tyr-477, Glu-482, Asp-505, Asp-507, Asp-509, Arg-511, and Glu-516.

The protein belongs to the protein kinase superfamily. Ser/Thr protein kinase family. CDPK subfamily. Interacts with SLAC1. Interacts with FD. As to expression, expressed in both guard cells and mesophyll cells. Expressed in the shoot apical meristem.

It is found in the cell membrane. The protein localises to the nucleus. It carries out the reaction L-seryl-[protein] + ATP = O-phospho-L-seryl-[protein] + ADP + H(+). The enzyme catalyses L-threonyl-[protein] + ATP = O-phospho-L-threonyl-[protein] + ADP + H(+). Activated by calcium. Autophosphorylation may play an important role in the regulation of the kinase activity. Its function is as follows. May play a role in signal transduction pathways that involve calcium as a second messenger. Functions in abscisic acid (ABA) regulation of guard cell S-type anion- and Ca(2+)-permeable channels and stomatal closure. Phosphorylates FD. In Arabidopsis thaliana (Mouse-ear cress), this protein is Calcium-dependent protein kinase 6 (CPK6).